The chain runs to 613 residues: Dihydroxy-acid dehydratase (613 aa).

D81 serves as a coordination point for Mg(2+). A [2Fe-2S] cluster-binding site is contributed by C122. Residues D123 and K124 each coordinate Mg(2+). Residue K124 is modified to N6-carboxylysine. C197 is a [2Fe-2S] cluster binding site. E493 is a binding site for Mg(2+). S519 serves as the catalytic Proton acceptor.

Belongs to the IlvD/Edd family. In terms of assembly, homodimer. The cofactor is [2Fe-2S] cluster. Mg(2+) is required as a cofactor.

The enzyme catalyses (2R)-2,3-dihydroxy-3-methylbutanoate = 3-methyl-2-oxobutanoate + H2O. The catalysed reaction is (2R,3R)-2,3-dihydroxy-3-methylpentanoate = (S)-3-methyl-2-oxopentanoate + H2O. It functions in the pathway amino-acid biosynthesis; L-isoleucine biosynthesis; L-isoleucine from 2-oxobutanoate: step 3/4. Its pathway is amino-acid biosynthesis; L-valine biosynthesis; L-valine from pyruvate: step 3/4. Functions in the biosynthesis of branched-chain amino acids. Catalyzes the dehydration of (2R,3R)-2,3-dihydroxy-3-methylpentanoate (2,3-dihydroxy-3-methylvalerate) into 2-oxo-3-methylpentanoate (2-oxo-3-methylvalerate) and of (2R)-2,3-dihydroxy-3-methylbutanoate (2,3-dihydroxyisovalerate) into 2-oxo-3-methylbutanoate (2-oxoisovalerate), the penultimate precursor to L-isoleucine and L-valine, respectively. In Corynebacterium glutamicum (strain R), this protein is Dihydroxy-acid dehydratase.